A 371-amino-acid chain; its full sequence is Glutamate 5-kinase (371 aa).

K10 is a binding site for ATP. S50, D137, and N149 together coordinate substrate. Residues 169–170 (SD) and 208–214 (TGGMYTK) contribute to the ATP site. The PUA domain occupies 274–352 (QGKVYIDDGA…EEIKNILGED (79 aa)).

Belongs to the glutamate 5-kinase family.

The protein resides in the cytoplasm. The catalysed reaction is L-glutamate + ATP = L-glutamyl 5-phosphate + ADP. It participates in amino-acid biosynthesis; L-proline biosynthesis; L-glutamate 5-semialdehyde from L-glutamate: step 1/2. Its function is as follows. Catalyzes the transfer of a phosphate group to glutamate to form L-glutamate 5-phosphate. The polypeptide is Glutamate 5-kinase (Dictyoglomus thermophilum (strain ATCC 35947 / DSM 3960 / H-6-12)).